The primary structure comprises 608 residues: MGKPPRAMTPVEEVDLSAVRYQSPSLQAPHLTGFSLRAFVWLMESPLFGRLLTSVLKSQNNITRMLQDTVIPERPMYLPEYPPQEPEQGVLLLGDDRDPVDRVEEALHCLPPYDPSLRWPAGDKPPFLYWKIRDFAHAYRSGITTPSVVAEHIIAGVEEWSNKKPPMPMLVYFNADDLRKQAEASTKRFQQGNPISILDGIFIAIKDDIDCFPYPSKGATTFFDKIRSVEKDAVCVARLRKCGVLFIGKANMHELGLGVTGNNPNYGTARNPHSIDRYTGGSSSGPAALVSSGLCSAAIGTDGGGSVRIPSSLCGIIGLKTTYGRTDMTGALCDCGTVEVASPLAASVEDALLVYSAIAGSRPMDKLTLRPSPLCVPNLVSPDNNNILGSVKIGKYTEWFHDVSDRDISNTCEDALNLLCSSFGCQIEEIILPELEEMRTAHVVSIGTESFCDLNPHYRAGKRTEFTLDTRTSLALFGSFTSTDYVASQRIRRRIMYYHNEAFKKVDVIATPTTGITAPEIPQSSLKLGESNYVVSAYLMRFVIAGNLLGLPAITVPVGHDKQGLPIGLQLIGRPWGEASLLRVASAIEELCLKKRKRPSAFHDILNA.

Residues K206 and S282 each act as charge relay system in the active site. Substrate is bound at residue 303 to 306; the sequence is GGGS. The active-site Acyl-ester intermediate is S306.

It belongs to the amidase family. In terms of assembly, forms homodimers.

It is found in the endoplasmic reticulum membrane. Its subcellular location is the cell membrane. The catalysed reaction is N-(9Z,12Z-octadecadienoyl)-ethanolamine + H2O = ethanolamine + (9Z,12Z)-octadecadienoate. It catalyses the reaction N-hexadecanoylethanolamine + H2O = ethanolamine + hexadecanoate. It carries out the reaction N-dodecanoylethanolamine + H2O = dodecanoate + ethanolamine. With respect to regulation, inhibited by methyl arachidonyl fluorophosphonate (MAFP). Catalyzes the hydrolysis of bioactive endogenous fatty acid amides to their corresponding acids. The hydrolysis of endogenous amidated lipids terminates their participation as lipid mediators in various signaling systems. Converts a wide range of N-acylethanolamines (NAEs) to their corresponding free fatty acids and ethanolamine. This chain is Fatty acid amide hydrolase, found in Oryza sativa subsp. indica (Rice).